The chain runs to 428 residues: Citrate synthase (428 aa).

Residues His265, His306, and Asp363 contribute to the active site.

The protein belongs to the citrate synthase family. As to quaternary structure, homohexamer.

It carries out the reaction oxaloacetate + acetyl-CoA + H2O = citrate + CoA + H(+). Its pathway is carbohydrate metabolism; tricarboxylic acid cycle; isocitrate from oxaloacetate: step 1/2. Its activity is regulated as follows. Allosterically inhibited by NADH. This Pseudomonas aeruginosa (strain ATCC 15692 / DSM 22644 / CIP 104116 / JCM 14847 / LMG 12228 / 1C / PRS 101 / PAO1) protein is Citrate synthase (gltA).